A 202-amino-acid polypeptide reads, in one-letter code: MRNVSMTQRISEVVRNTNETKIRVRLNLDGTGQGTLNTGVPFLDHMIDQIKRHGLFDIDIHCDGDLEIDDHHTVEDCGITLGQAFAQALGDKKGLRRYGHFYAPLDEALSRVVVDLSGRPGLFMDIPFTRARIGTFDVDLFSEFFQGFVNHALMTLHIDNLKGKNSHHQIESVFKALARALRMACEIDPRAENTIASTKGSL.

The protein belongs to the imidazoleglycerol-phosphate dehydratase family.

Its subcellular location is the cytoplasm. The enzyme catalyses D-erythro-1-(imidazol-4-yl)glycerol 3-phosphate = 3-(imidazol-4-yl)-2-oxopropyl phosphate + H2O. It functions in the pathway amino-acid biosynthesis; L-histidine biosynthesis; L-histidine from 5-phospho-alpha-D-ribose 1-diphosphate: step 6/9. This Acinetobacter baumannii (strain AYE) protein is Imidazoleglycerol-phosphate dehydratase.